Consider the following 689-residue polypeptide: Glycine--tRNA ligase beta subunit (689 aa).

This sequence belongs to the class-II aminoacyl-tRNA synthetase family. As to quaternary structure, tetramer of two alpha and two beta subunits.

The protein localises to the cytoplasm. It catalyses the reaction tRNA(Gly) + glycine + ATP = glycyl-tRNA(Gly) + AMP + diphosphate. This chain is Glycine--tRNA ligase beta subunit, found in Coxiella burnetii (strain Dugway 5J108-111).